The sequence spans 219 residues: Transmembrane emp24 domain-containing protein 10 (219 aa).

A signal peptide spans 1 to 31; it reads MSGSSGPQAQRGPCPFALLLLLLLGPSSVLA. A required for interaction with STX17 region spans residues 1–142; sequence MSGSSGPQAQ…KNYEEIAKVE (142 aa). The Lumenal segment spans residues 32-185; it reads ISFHLPVNSR…RDTNESTNTR (154 aa). One can recognise a GOLD domain in the interval 41 to 193; it reads RKCLREEIHK…TRVLYFSIFS (153 aa). Positions 147–178 are required for TMED10 and TMED2 cis-Golgi network localization; sequence LEVELRRLEDLSESIVNDFAYMKKREEEMRDT. Dimethylated arginine is present on residues Arg-171 and Arg-176. Asn-179 carries an N-linked (GlcNAc...) asparagine glycan. A helical membrane pass occupies residues 186 to 206; the sequence is VLYFSIFSMFCLIGLATWQVF. The interaction with COPG1 stretch occupies residues 204 to 219; that stretch reads QVFYLRRFFKAKKLIE. Topologically, residues 207–219 are cytoplasmic; the sequence is YLRRFFKAKKLIE. Positions 207-219 are interaction with ARF1 and IL1B; sequence YLRRFFKAKKLIE. Residues 211-212 carry the COPII vesicle coat-binding motif; that stretch reads FF. The COPI vesicle coat-binding signature appears at 211–219; it reads FFKAKKLIE.

Belongs to the EMP24/GP25L family. In terms of assembly, predominantly dimeric and to a lesser extent monomeric in the ER. Monomer and dimer in ERGIC and cis-Golgi network. Forms homooligomer (via GOLD domain); the assembly is promoted by direct binding with leaderless cargos and may form a protein channel that facilitates cargo entry into the ERGIC. Forms heterooligomeric complexes with other members of the p24 family such as TMED2, TMED7 and TMED9. Interacts (via GOLD domain) with TMED2 (via GOLD domain); the complex is required for export of TMED10 from the ER to the cis-Golgi network; the complex is proposed to be involved in cis-Golgi network dynamics and / or biogenesis. Associates with the COPI vesicle coat subunits (coatomer). Tetramerization of the cytoplasmic domain at the Golgi membrane in vitro; the complex is proposed to interact with COPI coatomer and induce budding of the vesicles. Interacts with COPG1; the interaction involves TMED10 homodimer. Interacts with ARF1 (GDP-bound); the interaction probably involves a TMED10 oligomer. Interacts with SEC23A, SEC24B, SEC24C and SEC24D components of the coat protein complex II/COPII, indicative of an association of TMED10 with the COPII vesicle coat. Interacts with CD59. Interacts with MPPE1/PGAP5; the complex might recruit and sort GPI-anchored proteins to the ER-exit site, or the interaction might lead to recycling of PGAP5 between the ER and the Golgi. Interacts with F2LR1/PAR2. Interacts with KDELR2/ERD2; the interaction is disrupted by KDELR2 ligand. Found in a complex composed at least of SURF4, TMED2 and TMED10. Associates with the presenilin-dependent gamma-secretase complex. Interacts with STX17; the interaction is direct. Interacts with IL-1; the interaction is direct. Interacts with RAB21 (active GTP-bound form); the interaction is indirect and regulates TMED10 abundance and localization at the Golgi.

Its subcellular location is the endoplasmic reticulum membrane. It is found in the endoplasmic reticulum-Golgi intermediate compartment membrane. The protein localises to the golgi apparatus membrane. It localises to the golgi apparatus. The protein resides in the cis-Golgi network membrane. Its subcellular location is the trans-Golgi network membrane. It is found in the cytoplasmic vesicle. The protein localises to the secretory vesicle membrane. It localises to the cell membrane. The protein resides in the melanosome. Cargo receptor involved in protein vesicular trafficking and quality control in the endoplasmic reticulum (ER) and Golgi. The p24 protein family is a group of transmembrane proteins that bind coat protein complex I/COPI and coat protein complex II/COPII involved in vesicular trafficking between the membranes. Acts at the lumenal side for incorporation of secretory cargo molecules into transport vesicles and involved in vesicle coat formation at the cytoplasmic side. Mainly functions in the early secretory pathway and cycles between the ER, ER-Golgi intermediate compartment (ERGIC) and Golgi, mediating cargo transport through COPI and COPII-coated vesicles. In COPII vesicle-mediated anterograde transport, involved in the transport of GPI-anchored proteins by acting together with TMED2 as their cargo receptor; the function specifically implies SEC24C and SEC24D of the COPII vesicle coat and lipid raft-like microdomains of the ER. Recognizes GPI anchors structural remodeled in the ER by the GPI inositol-deacylase/PGAP1 and the metallophosphoesterase MPPE1/PGAP5. In COPI vesicle-mediated retrograde transport, involved in the biogenesis of COPI vesicles and vesicle coat recruitment. Involved in trafficking of amyloid beta A4 protein and soluble APP-beta release (independent from the modulation of gamma-secretase activity). Involved in the KDELR2-mediated retrograde transport of the toxin A subunit (CTX-A-K63)together with COPI and the COOH terminus of KDELR2. On Golgi membranes, acts as a primary receptor for ARF1-GDP, a GTP-binding protein involved in COPI-vesicle formation. Increases coatomer-dependent GTPase-activating activity of ARFGAP2 which mediates the hydrolysis of ARF1-bound GTP and therefore modulates protein trafficking from the Golgi apparatus. Involved in the exocytic trafficking of G protein-coupled receptors F2LR1/PAR2 (trypsin and tryspin-like enzyme receptor), OPRM1 (opioid receptor) and P2RY4 (UTD and UDP receptor) from the Golgi to the plasma membrane, thus contributing to receptor resensitization. In addition to its cargo receptor activity, may also act as a protein channel after oligomerization, facilitating the post-translational entry of leaderless cytoplasmic cargo into the ERGIC. Involved in the translocation into ERGIC, the vesicle entry and the secretion of leaderless cargos (lacking the secretion signal sequence), including the mature form of interleukin 1/IL-1 family members, the alpha-crystallin B chain HSPB5, the carbohydrate-binding proteins galectin-1/LGALS1 and galectin-3/LGALS3, the microtubule-associated protein Tau/MAPT, and the annexin A1/ANXA1; the translocation process is dependent on cargo protein unfolding and enhanced by chaperones HSP90AB1 and HSP90B1/GRP9. Could also associates with the presenilin-dependent gamma-secretase complex in order to regulate gamma-cleavages of the amyloid beta A4 protein to yield amyloid-beta 40/Abeta40. This Bos taurus (Bovine) protein is Transmembrane emp24 domain-containing protein 10 (TMED10).